Reading from the N-terminus, the 266-residue chain is 5'-nucleotidase SurE (266 aa).

Residues D8, D9, S40, and N98 each contribute to the a divalent metal cation site.

It belongs to the SurE nucleotidase family. A divalent metal cation serves as cofactor.

The protein resides in the cytoplasm. The enzyme catalyses a ribonucleoside 5'-phosphate + H2O = a ribonucleoside + phosphate. Functionally, nucleotidase that shows phosphatase activity on nucleoside 5'-monophosphates. This chain is 5'-nucleotidase SurE, found in Parasynechococcus marenigrum (strain WH8102).